The sequence spans 583 residues: Aspartate--tRNA ligase (583 aa).

E169 serves as a coordination point for L-aspartate. The tract at residues 193 to 196 (QLFK) is aspartate. R215 contacts L-aspartate. Residues 215–217 (RDE) and Q224 contribute to the ATP site. Position 443 (H443) interacts with L-aspartate. Position 477 (E477) interacts with ATP. R484 lines the L-aspartate pocket. 529 to 532 (GIDR) lines the ATP pocket.

The protein belongs to the class-II aminoacyl-tRNA synthetase family. Type 1 subfamily. In terms of assembly, homodimer.

Its subcellular location is the cytoplasm. The enzyme catalyses tRNA(Asp) + L-aspartate + ATP = L-aspartyl-tRNA(Asp) + AMP + diphosphate. Functionally, catalyzes the attachment of L-aspartate to tRNA(Asp) in a two-step reaction: L-aspartate is first activated by ATP to form Asp-AMP and then transferred to the acceptor end of tRNA(Asp). In Stenotrophomonas maltophilia (strain K279a), this protein is Aspartate--tRNA ligase.